A 492-amino-acid chain; its full sequence is Metal cation symporter ZIP14 (492 aa).

A signal peptide spans 1 to 30 (MKLLLLHPAFQSCLLLTLLGLWRTTPEAHA). Over 31–157 (SSLGAPAISA…PSAVEVWGYG (127 aa)) the chain is Extracellular. 3 N-linked (GlcNAc...) asparagine glycosylation sites follow: asparagine 77, asparagine 87, and asparagine 102. A helical membrane pass occupies residues 158-178 (LLCVTVISLCSLLGASVVPFM). Residues 179 to 186 (KKTFYKRL) are Cytoplasmic-facing. Residues 187–207 (LLYFIALAIGTLYSNALFQLI) form a helical membrane-spanning segment. The Extracellular segment spans residues 208–224 (PEAFGFNPLEDYYVSKS). A helical membrane pass occupies residues 225-245 (AVVFGGFYLFFFTEKILKILL). At 246–397 (KQKNEHHHGH…LLNAGMSIQQ (152 aa)) the chain is on the cytoplasmic side. Residues 251–258 (HHHGHSHY) carry the HHHGHXHX-motif motif. The XEXPHE-motif signature appears at 376–381 (EEFPHE). The chain crosses the membrane as a helical span at residues 398 to 418 (ALFFNFLSACCCYLGLAFGIL). Topologically, residues 419–424 (AGSHFS) are extracellular. Residues 425–445 (ANWIFALAGGMFLYISLADMF) form a helical membrane-spanning segment. The Cytoplasmic portion of the chain corresponds to 446 to 460 (PEMNEVCQEDERKGS). The helical transmembrane segment at 461–481 (ILIPFIIQNLGLLTGFTIMVV) threads the bilayer. The Extracellular portion of the chain corresponds to 482–492 (LTMYSGQIQIG).

This sequence belongs to the ZIP transporter (TC 2.A.5) family. Homotrimer. Post-translationally, ubiquitinated. Ubiquitination occurs upon iron depletion. The ubiquitinated form undergoes proteasomal degradation. In terms of processing, N-glycosylated. N-glycosylation at Asn-102 is required for iron-regulated extraction of the transporter from membranes and subsequent proteasomal degradation. As to expression, ubiquitously expressed, with higher expression in liver, pancreas, fetal liver, thyroid gland, left and right ventricle, right atrium and fetal heart. Weakly expressed in spleen, thymus, and peripheral blood leukocytes. Expressed in liver and in brain by large neurons in the globus pallidus, the insular cortex and the dentate nucleus and to a lower extent in the putamen and the caudate nucleus (at protein level). Expressed in osteoblasts and giant osteoclast-like cells, but not in osteocytes found osteoblastoma and giant cell tumors (at protein level). Expressed by microvascular capillary endothelial cells that constitute the blood-brain barrier (at protein level). Expressed by macrophages. In terms of tissue distribution, widely expressed but not detected in brain, heart, skeletal muscle, placenta and fetal skin.

The protein resides in the cell membrane. The protein localises to the apical cell membrane. It is found in the basolateral cell membrane. Its subcellular location is the early endosome membrane. It localises to the late endosome membrane. The protein resides in the lysosome membrane. It carries out the reaction Zn(2+)(out) + 2 hydrogencarbonate(out) = Zn(2+)(in) + 2 hydrogencarbonate(in). The enzyme catalyses Mn(2+)(out) + 2 hydrogencarbonate(out) = Mn(2+)(in) + 2 hydrogencarbonate(in). It catalyses the reaction Fe(2+)(out) + 2 hydrogencarbonate(out) = Fe(2+)(in) + 2 hydrogencarbonate(in). The catalysed reaction is Cd(2+)(out) + 2 hydrogencarbonate(out) = Cd(2+)(in) + 2 hydrogencarbonate(in). Functionally, electroneutral transporter of the plasma membrane mediating the cellular uptake of the divalent metal cations zinc, manganese and iron that are important for tissue homeostasis, metabolism, development and immunity. Functions as an energy-dependent symporter, transporting through the membranes an electroneutral complex composed of a divalent metal cation and two bicarbonate anions. Beside these endogenous cellular substrates, can also import cadmium a non-essential metal which is cytotoxic and carcinogenic. Controls the cellular uptake by the intestinal epithelium of systemic zinc, which is in turn required to maintain tight junctions and the intestinal permeability. Modifies the activity of zinc-dependent phosphodiesterases, thereby indirectly regulating G protein-coupled receptor signaling pathways important for gluconeogenesis and chondrocyte differentiation. Regulates insulin receptor signaling, glucose uptake, glycogen synthesis and gluconeogenesis in hepatocytes through the zinc-dependent intracellular catabolism of insulin. Through zinc cellular uptake also plays a role in the adaptation of cells to endoplasmic reticulum stress. Major manganese transporter of the basolateral membrane of intestinal epithelial cells, it plays a central role in manganese systemic homeostasis through intestinal manganese uptake. Also involved in manganese extracellular uptake by cells of the blood-brain barrier. May also play a role in manganese and zinc homeostasis participating in their elimination from the blood through the hepatobiliary excretion. Also functions in the extracellular uptake of free iron. May also function intracellularly and mediate the transport from endosomes to cytosol of iron endocytosed by transferrin. Plays a role in innate immunity by regulating the expression of cytokines by activated macrophages. In Homo sapiens (Human), this protein is Metal cation symporter ZIP14.